The chain runs to 106 residues: Nucleoid-associated protein DIP0260 (106 aa).

It belongs to the YbaB/EbfC family. In terms of assembly, homodimer.

It localises to the cytoplasm. The protein resides in the nucleoid. In terms of biological role, binds to DNA and alters its conformation. May be involved in regulation of gene expression, nucleoid organization and DNA protection. The chain is Nucleoid-associated protein DIP0260 from Corynebacterium diphtheriae (strain ATCC 700971 / NCTC 13129 / Biotype gravis).